The following is a 603-amino-acid chain: MNMLPTLTLISLIILTSPIMLSPLRIHETRNFPHYVKMAVSYAFMVSMVPAMIFMHSGHEAVISNWHWMTIHTLKLSLSFKLDYFSLIFMPVALFVTWSIMEFSLWYMNSDPYINRFFKYLLLFLITMIILITANNLFQLFIGWEGVGIMSFLLIGWWYGRTDANTAALQAMIYNRIGDVGFVAAMAWFLLHSNSWELQQIFLTVPKGNTLPLTGLLLAAMGKSAQFGLHPWLPSAMEGPTPVSALLHSSTMVVAGVFLLIRFHPLMEMNPSILTLTLCVGAITTLFTAICALTQNDIKKIIAFSTSSQLGLMMVTIGINQPHLAFLHICTHAFFKAMLFMCSGSIIHSLGDEQDIRKMGGLYKTLPFTTTALIIGSLALTGMPFLTGFYSKDLIIEAMSSSYTNAWALLITFIATSMTAVYSTRIIFFTLLGQPRYPTLIQINENNPLLTNAIKRLMLGSIFAGFLISSNLPPTTVPPMTMPHHLKFMALAVTLLGFALAIELSSFTYHLKFDYPSHTYKFSNMLGYYPTIIHRSPPHYLLNTSQNLTSTIMDLAWLEKSIPKSLALMQKSASTTISNQKGMIKLYFLSFLISLTLGLLLII.

Transmembrane regions (helical) follow at residues 4 to 24 (LPTLTLISLIILTSPIMLSPL), 38 to 58 (MAVSYAFMVSMVPAMIFMHSG), 87 to 107 (LIFMPVALFVTWSIMEFSLWY), 117 to 137 (FFKYLLLFLITMIILITANNL), 140 to 160 (LFIGWEGVGIMSFLLIGWWYG), 171 to 191 (AMIYNRIGDVGFVAAMAWFLL), 211 to 233 (LPLTGLLLAAMGKSAQFGLHPWL), 241 to 261 (TPVSALLHSSTMVVAGVFLLI), 273 to 293 (ILTLTLCVGAITTLFTAICAL), 301 to 320 (IIAFSTSSQLGLMMVTIGIN), 331 to 351 (THAFFKAMLFMCSGSIIHSLG), 366 to 386 (LPFTTTALIIGSLALTGMPFL), 409 to 429 (LLITFIATSMTAVYSTRIIFF), 457 to 477 (LMLGSIFAGFLISSNLPPTTV), 488 to 508 (FMALAVTLLGFALAIELSSFT), and 583 to 603 (MIKLYFLSFLISLTLGLLLII).

Belongs to the complex I subunit 5 family.

The protein localises to the mitochondrion inner membrane. It catalyses the reaction a ubiquinone + NADH + 5 H(+)(in) = a ubiquinol + NAD(+) + 4 H(+)(out). Functionally, core subunit of the mitochondrial membrane respiratory chain NADH dehydrogenase (Complex I) that is believed to belong to the minimal assembly required for catalysis. Complex I functions in the transfer of electrons from NADH to the respiratory chain. The immediate electron acceptor for the enzyme is believed to be ubiquinone. The protein is NADH-ubiquinone oxidoreductase chain 5 (MT-ND5) of Dugong dugon (Dugong).